A 179-amino-acid polypeptide reads, in one-letter code: Translation initiation factor IF-3 (179 aa).

Belongs to the IF-3 family. In terms of assembly, monomer.

It is found in the cytoplasm. IF-3 binds to the 30S ribosomal subunit and shifts the equilibrium between 70S ribosomes and their 50S and 30S subunits in favor of the free subunits, thus enhancing the availability of 30S subunits on which protein synthesis initiation begins. This Treponema pallidum (strain Nichols) protein is Translation initiation factor IF-3.